The sequence spans 308 residues: Pantothenate kinase (308 aa).

An ATP-binding site is contributed by 93 to 100 (GSVAVGKS).

The protein belongs to the prokaryotic pantothenate kinase family.

The protein localises to the cytoplasm. It catalyses the reaction (R)-pantothenate + ATP = (R)-4'-phosphopantothenate + ADP + H(+). Its pathway is cofactor biosynthesis; coenzyme A biosynthesis; CoA from (R)-pantothenate: step 1/5. The chain is Pantothenate kinase from Corynebacterium aurimucosum (strain ATCC 700975 / DSM 44827 / CIP 107346 / CN-1) (Corynebacterium nigricans).